The sequence spans 113 residues: Small ribosomal subunit protein bS6 (113 aa).

This sequence belongs to the bacterial ribosomal protein bS6 family.

Binds together with bS18 to 16S ribosomal RNA. The protein is Small ribosomal subunit protein bS6 of Pseudoalteromonas translucida (strain TAC 125).